The primary structure comprises 313 residues: Lactamase-like protein nscB (313 aa).

Positions 97, 99, 101, and 102 each coordinate Zn(2+). The active-site Proton donor/acceptor is the D101.

It belongs to the metallo-beta-lactamase superfamily. Zn(2+) serves as cofactor.

The protein operates within secondary metabolite biosynthesis. Functionally, lactamase-like protein; part of the gene cluster that mediates the biosynthesis of neosartoricin B, a prenylated anthracenone that probably exhibits T-cell antiproliferative activity, suggestive of a physiological role as an immunosuppressive agent. The non-reducing polyketide synthase nscA probably synthesizes and cyclizes the decaketide backbone. The hydrolase nscB then mediates the product release through hydrolysis followed by spontaneous decarboxylation. The prenyltransferase nscD catalyzes the addition of the dimethylallyl group to the aromatic C5. The FAD-dependent monooxygenase nscC is then responsible for the stereospecific hydroxylation at C2. Neosartoricin B can be converted into two additional compounds neosartoricins C and D. Neosartoricin C is a spirocyclic compound that is cyclized through the attack of C3 hydroxyl on C14, followed by dehydration. On the other hand, neosartoricin D is a further cyclized compound in which attack of C2 on C14 in neosartoricin C results in the formation of the acetal-containing dioxabicyclo-octanone ring. Both of these compounds are novel and possibly represent related metabolites of the gene cluster. In Arthroderma gypseum (strain ATCC MYA-4604 / CBS 118893) (Microsporum gypseum), this protein is Lactamase-like protein nscB.